A 193-amino-acid chain; its full sequence is MTDYLLLFVGTVLVNNFVLVKFLGLCPFMGVSKKLETAMGMGLATTFVMTLASICAWLIDTWILIPLDLVYLRTLSFILVIAVVVQFTEMVVRKTSPALYRLLGIFLPLITTNCAVLGVALLNINLGHHFLQSALYGFSAAVGFSLVMVLFAAIRERLAVADVPAPFRGNAIALITAGLMSLAFMGFSGLVKL.

6 consecutive transmembrane segments (helical) span residues 5 to 25 (LLLF…FLGL), 47 to 67 (FVMT…LIPL), 72 to 92 (LRTL…EMVV), 102 to 122 (LLGI…VALL), 134 to 154 (ALYG…FAAI), and 171 to 191 (AIAL…SGLV).

This sequence belongs to the NqrDE/RnfAE family. The complex is composed of six subunits: RsxA, RsxB, RsxC, RsxD, RsxE and RsxG.

It is found in the cell inner membrane. Functionally, part of a membrane-bound complex that couples electron transfer with translocation of ions across the membrane. Required to maintain the reduced state of SoxR. The chain is Ion-translocating oxidoreductase complex subunit A from Salmonella arizonae (strain ATCC BAA-731 / CDC346-86 / RSK2980).